A 270-amino-acid chain; its full sequence is MSRKVFYISDGTAITAEVFGHAVLSQFPVEFEALTIPFVETTQKAEAVKAQINDCFITTGERPLVFHSIVKAEIRDIIYSSECIDYDFLNTFVAPLEDQLGVKAVPVTHRTHGKANHSYEARIDAINYAMENDDGQTLKHIDKADIVLLGVSRCGKTPSSLYLSMQFGIKAANYPFIEDDMDNLKLPEVLKKNKHKLFGLTIDPVRLHEIRQSRMENSRYSSLRQCRIEVKEVEMMYKRERIPFVNTTNHSVEEIATKILDVTGLERHMF.

Residue 150-157 (GVSRCGKT) coordinates ADP.

This sequence belongs to the pyruvate, phosphate/water dikinase regulatory protein family. PSRP subfamily.

It carries out the reaction [pyruvate, water dikinase] + ADP = [pyruvate, water dikinase]-phosphate + AMP + H(+). The enzyme catalyses [pyruvate, water dikinase]-phosphate + phosphate + H(+) = [pyruvate, water dikinase] + diphosphate. Functionally, bifunctional serine/threonine kinase and phosphorylase involved in the regulation of the phosphoenolpyruvate synthase (PEPS) by catalyzing its phosphorylation/dephosphorylation. The sequence is that of Putative phosphoenolpyruvate synthase regulatory protein from Shewanella loihica (strain ATCC BAA-1088 / PV-4).